The following is a 585-amino-acid chain: Glutathione S-transferase C-terminal domain-containing protein homolog (585 aa).

The 156-residue stretch at 120–275 folds into the GST C-terminal domain; the sequence is LGFKGSCLLA…DKCARVLRDL (156 aa).

It belongs to the GSTCD family.

The chain is Glutathione S-transferase C-terminal domain-containing protein homolog from Drosophila melanogaster (Fruit fly).